Here is a 78-residue protein sequence, read N- to C-terminus: NAD(P)H-quinone oxidoreductase subunit L (78 aa).

The next 2 membrane-spanning stretches (helical) occupy residues 10–30 (LFVI…IPLG) and 48–68 (LLIY…APFL).

Belongs to the complex I NdhL subunit family. NDH-1 can be composed of about 15 different subunits; different subcomplexes with different compositions have been identified which probably have different functions.

The protein resides in the cellular thylakoid membrane. The catalysed reaction is a plastoquinone + NADH + (n+1) H(+)(in) = a plastoquinol + NAD(+) + n H(+)(out). It catalyses the reaction a plastoquinone + NADPH + (n+1) H(+)(in) = a plastoquinol + NADP(+) + n H(+)(out). NDH-1 shuttles electrons from an unknown electron donor, via FMN and iron-sulfur (Fe-S) centers, to quinones in the respiratory and/or the photosynthetic chain. The immediate electron acceptor for the enzyme in this species is believed to be plastoquinone. Couples the redox reaction to proton translocation, and thus conserves the redox energy in a proton gradient. Cyanobacterial NDH-1 also plays a role in inorganic carbon-concentration. The polypeptide is NAD(P)H-quinone oxidoreductase subunit L (Prochlorococcus marinus (strain SARG / CCMP1375 / SS120)).